The following is a 347-amino-acid chain: Microfibril-associated glycoprotein 3 (347 aa).

A signal peptide spans M1 to L22. The Extracellular portion of the chain corresponds to E23 to D139. N-linked (GlcNAc...) asparagine glycans are attached at residues N31, N36, N63, and N103. Residues A47 to T130 enclose the Ig-like C2-type domain. Residues C68 and C117 are joined by a disulfide bond. Residues M140–V160 form a helical membrane-spanning segment. Residues T161–E347 are Cytoplasmic-facing. The segment at N280–E347 is disordered. A compositionally biased stretch (polar residues) spans V311–S331.

In terms of processing, glycosylated.

It localises to the cell membrane. Component of the elastin-associated microfibrils. The sequence is that of Microfibril-associated glycoprotein 3 (Mfap3) from Rattus norvegicus (Rat).